Reading from the N-terminus, the 95-residue chain is Small ribosomal subunit protein bS6 (95 aa).

This sequence belongs to the bacterial ribosomal protein bS6 family.

Binds together with bS18 to 16S ribosomal RNA. The polypeptide is Small ribosomal subunit protein bS6 (Bacillus licheniformis (strain ATCC 14580 / DSM 13 / JCM 2505 / CCUG 7422 / NBRC 12200 / NCIMB 9375 / NCTC 10341 / NRRL NRS-1264 / Gibson 46)).